We begin with the raw amino-acid sequence, 438 residues long: uncharacterized protein (438 aa).

Positions 23–193 (IHAKPPVVVV…VNATIRLTAA (171 aa)) constitute an FAD-binding PCMH-type domain. Residues 55–59 (VRGSG), 60–61 (HS), Q65, D117, T122, 128–132 (SVGGF), I183, Y393, and 430–433 (APGY) each bind FAD. The residue at position 60 (H60) is a Pros-8alpha-FAD histidine.

It belongs to the oxygen-dependent FAD-linked oxidoreductase family. Requires FAD as cofactor.

Functionally, the FAS-operon encodes genes involved in cytokinin production and in host plant fasciation (leafy gall). This is an uncharacterized protein from Rhodococcoides fascians (Rhodococcus fascians).